We begin with the raw amino-acid sequence, 97 residues long: ATP-dependent Clp protease adapter protein ClpS (97 aa).

The protein belongs to the ClpS family. In terms of assembly, binds to the N-terminal domain of the chaperone ClpA.

In terms of biological role, involved in the modulation of the specificity of the ClpAP-mediated ATP-dependent protein degradation. This is ATP-dependent Clp protease adapter protein ClpS from Nautilia profundicola (strain ATCC BAA-1463 / DSM 18972 / AmH).